Here is a 347-residue protein sequence, read N- to C-terminus: NADH-ubiquinone oxidoreductase chain 2 (347 aa).

11 helical membrane-spanning segments follow: residues 3–23 (PPIF…VMTS), 25–45 (HWML…PILM), 59–79 (YFLT…INLL), 96–116 (ILMT…FWVP), 122–142 (ISLS…LSIL), 149–169 (INPH…GWGG), 178–198 (IMAY…LYNP), 201–221 (MFLN…LFML), 237–257 (APLI…LPPL), 274–294 (EMII…YFYM), and 323–343 (TIFL…TPMI).

The protein belongs to the complex I subunit 2 family. As to quaternary structure, core subunit of respiratory chain NADH dehydrogenase (Complex I) which is composed of 45 different subunits. Interacts with TMEM242.

It is found in the mitochondrion inner membrane. The enzyme catalyses a ubiquinone + NADH + 5 H(+)(in) = a ubiquinol + NAD(+) + 4 H(+)(out). In terms of biological role, core subunit of the mitochondrial membrane respiratory chain NADH dehydrogenase (Complex I) which catalyzes electron transfer from NADH through the respiratory chain, using ubiquinone as an electron acceptor. Essential for the catalytic activity and assembly of complex I. The sequence is that of NADH-ubiquinone oxidoreductase chain 2 from Viverra tangalunga (Malayan civet).